The primary structure comprises 347 residues: Fructose-1,6-bisphosphatase class 1 (347 aa).

Mg(2+)-binding residues include glutamate 107, aspartate 128, leucine 130, and aspartate 131. Residues 131–134 (DGSS), asparagine 224, tyrosine 257, and lysine 286 each bind substrate. Glutamate 292 lines the Mg(2+) pocket.

This sequence belongs to the FBPase class 1 family. As to quaternary structure, homotetramer. Requires Mg(2+) as cofactor.

It is found in the cytoplasm. It catalyses the reaction beta-D-fructose 1,6-bisphosphate + H2O = beta-D-fructose 6-phosphate + phosphate. It participates in carbohydrate biosynthesis; gluconeogenesis. The polypeptide is Fructose-1,6-bisphosphatase class 1 (Sorangium cellulosum (strain So ce56) (Polyangium cellulosum (strain So ce56))).